The following is a 189-amino-acid chain: Peptidyl-tRNA hydrolase (189 aa).

Position 16 (Tyr16) interacts with tRNA. His21 serves as the catalytic Proton acceptor. TRNA contacts are provided by Phe67, Asn69, and Asn115.

It belongs to the PTH family. In terms of assembly, monomer.

The protein resides in the cytoplasm. The catalysed reaction is an N-acyl-L-alpha-aminoacyl-tRNA + H2O = an N-acyl-L-amino acid + a tRNA + H(+). Functionally, hydrolyzes ribosome-free peptidyl-tRNAs (with 1 or more amino acids incorporated), which drop off the ribosome during protein synthesis, or as a result of ribosome stalling. Catalyzes the release of premature peptidyl moieties from peptidyl-tRNA molecules trapped in stalled 50S ribosomal subunits, and thus maintains levels of free tRNAs and 50S ribosomes. In Legionella pneumophila (strain Paris), this protein is Peptidyl-tRNA hydrolase.